The following is a 383-amino-acid chain: Succinyl-diaminopimelate desuccinylase (383 aa).

His-73 provides a ligand contact to Zn(2+). The active site involves Asp-75. Asp-107 contributes to the Zn(2+) binding site. The active-site Proton acceptor is Glu-141. Zn(2+) contacts are provided by Glu-142, Glu-170, and His-356.

The protein belongs to the peptidase M20A family. DapE subfamily. In terms of assembly, homodimer. It depends on Zn(2+) as a cofactor. The cofactor is Co(2+).

It carries out the reaction N-succinyl-(2S,6S)-2,6-diaminopimelate + H2O = (2S,6S)-2,6-diaminopimelate + succinate. It functions in the pathway amino-acid biosynthesis; L-lysine biosynthesis via DAP pathway; LL-2,6-diaminopimelate from (S)-tetrahydrodipicolinate (succinylase route): step 3/3. In terms of biological role, catalyzes the hydrolysis of N-succinyl-L,L-diaminopimelic acid (SDAP), forming succinate and LL-2,6-diaminopimelate (DAP), an intermediate involved in the bacterial biosynthesis of lysine and meso-diaminopimelic acid, an essential component of bacterial cell walls. The polypeptide is Succinyl-diaminopimelate desuccinylase (Pseudomonas syringae pv. syringae (strain B728a)).